The sequence spans 249 residues: MSPAPSRPRIRPWLVVGDLALAAAWVCAGALVKLLVYGGLGLGGRPEAEAVKVSLSLVYMFLFAWLEAASGGASYNPLTVLAAALASHGGPAVYLFTAFARIPAQVIGAVLGVKLIQVTFPNVGKGARLSVGAHHGALAEGLATFMVVMVSVTLKKKEMKSFFMKTWITSIWKNTIHLLSSDITGGIMNPASAFAWAYARGDHTTFDHLLVYWLAPLQATLLGVWAVTFFTKPKKIKEQKVDENKIKKE.

A run of 2 helical transmembrane segments spans residues 12-32 and 53-73; these read PWLVVGDLALAAAWVCAGALV and VSLSLVYMFLFAWLEAASGGA. The NPA 1 motif lies at 76–78; the sequence is NPL. The next 4 membrane-spanning stretches (helical) occupy residues 104 to 124, 133 to 155, 176 to 196, and 210 to 230; these read AQVIGAVLGVKLIQVTFPNVG, AHHGALAEGLATFMVVMVSVTLK, IHLLSSDITGGIMNPASAFAW, and LVYWLAPLQATLLGVWAVTFF. Positions 189–191 match the NPA 2 motif; the sequence is NPA.

The protein belongs to the MIP/aquaporin (TC 1.A.8) family. SIP (TC 1.A.8.10) subfamily.

The protein resides in the membrane. Aquaporins facilitate the transport of water and small neutral solutes across cell membranes. The protein is Aquaporin SIP2-1 (SIP2-1) of Zea mays (Maize).